The primary structure comprises 201 residues: Large ribosomal subunit protein uL4 (201 aa).

Residues Ala-45–Gly-71 are disordered.

The protein belongs to the universal ribosomal protein uL4 family. In terms of assembly, part of the 50S ribosomal subunit.

Functionally, one of the primary rRNA binding proteins, this protein initially binds near the 5'-end of the 23S rRNA. It is important during the early stages of 50S assembly. It makes multiple contacts with different domains of the 23S rRNA in the assembled 50S subunit and ribosome. In terms of biological role, forms part of the polypeptide exit tunnel. This Shewanella oneidensis (strain ATCC 700550 / JCM 31522 / CIP 106686 / LMG 19005 / NCIMB 14063 / MR-1) protein is Large ribosomal subunit protein uL4.